The chain runs to 367 residues: MHTMHIPSGDVLIPKPKLITEETDPLHIIKTRQKTHGRPVTIAGPMVRYSKLPFRQLCREYNVDIVYSPMILAREYVRNEHARISDLSTNNEDTPLIVQVGVNNVADLLKFVEMVAPYCDGIGINCGCPIKEQIREGIGCALIYNSDLLCSMVHAVKDKYGDKLRIETKIRIHEALDETVELCRKLCDAGVDWITIHGRTRRTRSSQPANLDAIKYIIENISDKNVPVIANGDCFKLSDLERITKYTGAHGVMAVRGLLSNPALFAGYTTCPWGCIEKFCYWALEFGGLPFQLAQHHLYCMLENMELKKSLLKKMMNLKNYISLIDWFNKTFEFKRYGEDGFGMGVEIPYKANSCVQRSASVVERQE.

Residues 45-47 (PMV) and Gln-99 contribute to the FMN site. Cys-128 acts as the Proton donor in catalysis. FMN-binding positions include Lys-169, His-197, 231 to 233 (NGD), and 255 to 256 (VR).

This sequence belongs to the Dus family. Dus4 subfamily. FMN is required as a cofactor.

It catalyses the reaction 5,6-dihydrouridine(20a) in tRNA + NADP(+) = uridine(20a) in tRNA + NADPH + H(+). The enzyme catalyses 5,6-dihydrouridine(20a) in tRNA + NAD(+) = uridine(20a) in tRNA + NADH + H(+). The catalysed reaction is 5,6-dihydrouridine(20b) in tRNA + NAD(+) = uridine(20b) in tRNA + NADH + H(+). It carries out the reaction 5,6-dihydrouridine(20b) in tRNA + NADP(+) = uridine(20b) in tRNA + NADPH + H(+). It catalyses the reaction a 5,6-dihydrouridine in mRNA + NAD(+) = a uridine in mRNA + NADH + H(+). The enzyme catalyses a 5,6-dihydrouridine in mRNA + NADP(+) = a uridine in mRNA + NADPH + H(+). Its function is as follows. Catalyzes the synthesis of dihydrouridine, a modified base found in the D-loop of most tRNAs. Specifically modifies U20a and U20b in cytoplasmic tRNAs. Also able to mediate dihydrouridylation of some mRNAs, thereby affecting their translation. In Saccharomyces cerevisiae (strain ATCC 204508 / S288c) (Baker's yeast), this protein is tRNA-dihydrouridine(20a/20b) synthase [NAD(P)+].